Consider the following 492-residue polypeptide: Adenosylhomocysteinase (492 aa).

The substrate site is built by Thr68, Asp153, and Glu215. 216 to 218 is a binding site for NAD(+); it reads TTT. Substrate-binding residues include Lys245 and Asp249. NAD(+) is bound by residues Asn250, 279–284, Glu302, Asn337, 358–360, and Asn406; these read GYGDVG and IGH.

The protein belongs to the adenosylhomocysteinase family. Requires NAD(+) as cofactor.

The protein localises to the cytoplasm. The catalysed reaction is S-adenosyl-L-homocysteine + H2O = L-homocysteine + adenosine. The protein operates within amino-acid biosynthesis; L-homocysteine biosynthesis; L-homocysteine from S-adenosyl-L-homocysteine: step 1/1. Functionally, may play a key role in the regulation of the intracellular concentration of adenosylhomocysteine. The protein is Adenosylhomocysteinase of Mycobacterium ulcerans (strain Agy99).